The following is a 526-amino-acid chain: Alpha-ketoglutaric semialdehyde dehydrogenase (526 aa).

NADP(+) is bound by residues 159 to 160 (SN), 185 to 188 (KAHS), and 240 to 241 (GS). Glutamate 264 serves as the catalytic Proton acceptor. Cysteine 301 acts as the Nucleophile in catalysis. An NADP(+)-binding site is contributed by glutamate 393.

It belongs to the aldehyde dehydrogenase family.

The enzyme catalyses 2,5-dioxopentanoate + NADP(+) + H2O = 2-oxoglutarate + NADPH + 2 H(+). The protein operates within carbohydrate acid metabolism; D-glucarate degradation. Catalyzes the NAD(P)(+)-dependent oxidation of alpha-ketoglutaric semialdehyde (alphaKGSA) to alpha-ketoglutarate in the D-glutarate degradation pathway. The sequence is that of Alpha-ketoglutaric semialdehyde dehydrogenase from Acinetobacter baylyi (strain ATCC 33305 / BD413 / ADP1).